The following is a 711-amino-acid chain: Interferon-induced GTP-binding protein Mx2 (711 aa).

Residues 115–387 (DLALPAIAVI…LILHINKSLP (273 aa)) form the Dynamin-type G domain. The interval 125 to 132 (GDQSSGKS) is G1 motif. A GTP-binding site is contributed by 125–132 (GDQSSGKS). Residues 150–152 (VTR) are G2 motif. The tract at residues 225–228 (DLPG) is G3 motif. GTP is bound by residues 225–229 (DLPGI) and 294–297 (TKPD). Residues 294–297 (TKPD) are G4 motif. The G5 motif stretch occupies residues 326-329 (RCRG). One can recognise a GED domain in the interval 623–711 (NDEIGVHLNA…ARRALYMFFS (89 aa)).

This sequence belongs to the TRAFAC class dynamin-like GTPase superfamily. Dynamin/Fzo/YdjA family.

It is found in the cytoplasm. It localises to the nucleus. Functionally, interferon-induced dynamin-like GTPase with antiviral activity against vesicular stomatitis virus (VSV). The sequence is that of Interferon-induced GTP-binding protein Mx2 (MX2) from Canis lupus familiaris (Dog).